The primary structure comprises 518 residues: ATP synthase subunit alpha (518 aa).

ATP is bound at residue 169-176; it reads GDRQTGKT.

The protein belongs to the ATPase alpha/beta chains family. As to quaternary structure, F-type ATPases have 2 components, CF(1) - the catalytic core - and CF(0) - the membrane proton channel. CF(1) has five subunits: alpha(3), beta(3), gamma(1), delta(1), epsilon(1). CF(0) has three main subunits: a(1), b(2) and c(9-12). The alpha and beta chains form an alternating ring which encloses part of the gamma chain. CF(1) is attached to CF(0) by a central stalk formed by the gamma and epsilon chains, while a peripheral stalk is formed by the delta and b chains.

The protein resides in the cell membrane. It carries out the reaction ATP + H2O + 4 H(+)(in) = ADP + phosphate + 5 H(+)(out). Its function is as follows. Produces ATP from ADP in the presence of a proton gradient across the membrane. The alpha chain is a regulatory subunit. This Mycoplasma genitalium (strain ATCC 33530 / DSM 19775 / NCTC 10195 / G37) (Mycoplasmoides genitalium) protein is ATP synthase subunit alpha.